Here is a 212-residue protein sequence, read N- to C-terminus: Leucine efflux protein (212 aa).

Transmembrane regions (helical) follow at residues 12–32, 49–69, 71–91, 122–142, 153–173, and 188–208; these read TYLV…LFVL, GVFI…ATLI, TTPI…LYLG, ILSL…VQFI, FFIL…FLII, and LAKV…ARLA.

It belongs to the Rht family.

It is found in the cell inner membrane. It catalyses the reaction L-leucine(in) + H(+)(out) = L-leucine(out) + H(+)(in). In terms of biological role, exporter of leucine. The sequence is that of Leucine efflux protein (leuE) from Shigella sonnei (strain Ss046).